Here is a 27-residue protein sequence, read N- to C-terminus: Conotoxin flf14a (27 aa).

2 disulfide bridges follow: Cys6-Cys26 and Cys10-Cys22.

In terms of tissue distribution, expressed by the venom duct.

The protein localises to the secreted. This Conus anabathrum floridanus (Florida cone) protein is Conotoxin flf14a.